Reading from the N-terminus, the 1154-residue chain is Paired amphipathic helix protein pst3 (1154 aa).

2 disordered regions span residues 1 to 71 and 91 to 110; these read MDVM…RSVT and SGKDGSISSQNAEGLSSSSN. Over residues 9-27 the composition is skewed to basic and acidic residues; it reads DSERDNPGDKVETQSDKNH. Composition is skewed to polar residues over residues 32–45 and 100–110; these read SPSQSQSPVNTSLH and QNAEGLSSSSN. The PAH 1 domain maps to 111–181; the sequence is RPLDVNDALS…EGFNTFLPSG (71 aa). Disordered stretches follow at residues 199-249 and 321-376; these read GTPM…STEN and DNVD…KTSR. A compositionally biased stretch (low complexity) spans 228 to 241; it reads STSPTDSQPQPSAP. The PAH 2 domain maps to 252–322; the sequence is PRVDFNYAIA…EEFKLFLPDN (71 aa). 2 stretches are compositionally biased toward polar residues: residues 323–337 and 365–376; these read VDSTEPSTPNVQKSP and AQISRSISKTSR. The 70-residue stretch at 403–472 folds into the PAH 3 domain; sequence SPYAATQEEL…LWFSEFIRWS (70 aa). The disordered stretch occupies residues 797 to 824; it reads NSNNTNVSFQTDETQTEDETMSDIHPDD.

The protein localises to the nucleus. The sequence is that of Paired amphipathic helix protein pst3 (pst3) from Schizosaccharomyces pombe (strain 972 / ATCC 24843) (Fission yeast).